Reading from the N-terminus, the 671-residue chain is DNA ligase (671 aa).

NAD(+)-binding positions include aspartate 32–aspartate 36, serine 81–leucine 82, and glutamate 114. The active-site N6-AMP-lysine intermediate is lysine 116. Positions 137, 175, 292, and 316 each coordinate NAD(+). Positions 410, 413, 428, and 434 each coordinate Zn(2+). One can recognise a BRCT domain in the interval glutamate 592 to arginine 671.

The protein belongs to the NAD-dependent DNA ligase family. LigA subfamily. It depends on Mg(2+) as a cofactor. Mn(2+) serves as cofactor.

It catalyses the reaction NAD(+) + (deoxyribonucleotide)n-3'-hydroxyl + 5'-phospho-(deoxyribonucleotide)m = (deoxyribonucleotide)n+m + AMP + beta-nicotinamide D-nucleotide.. Functionally, DNA ligase that catalyzes the formation of phosphodiester linkages between 5'-phosphoryl and 3'-hydroxyl groups in double-stranded DNA using NAD as a coenzyme and as the energy source for the reaction. It is essential for DNA replication and repair of damaged DNA. The chain is DNA ligase from Baumannia cicadellinicola subsp. Homalodisca coagulata.